The sequence spans 385 residues: DNA replication and repair protein RecF (385 aa).

Glycine 30–threonine 37 contributes to the ATP binding site.

It belongs to the RecF family.

It is found in the cytoplasm. The RecF protein is involved in DNA metabolism; it is required for DNA replication and normal SOS inducibility. RecF binds preferentially to single-stranded, linear DNA. It also seems to bind ATP. The chain is DNA replication and repair protein RecF from Mycobacterium bovis (strain ATCC BAA-935 / AF2122/97).